The following is a 204-amino-acid chain: Somatotropin (204 aa).

An N-terminal signal peptide occupies residues 1-17; sequence MNSVVLLLSVVCLGVSS. A Pyrrolidone carboxylic acid modification is found at Gln18. His36 serves as a coordination point for Zn(2+). The cysteines at positions 69 and 177 are disulfide-linked. Glu186 contributes to the Zn(2+) binding site. A disulfide bridge connects residues Cys194 and Cys202.

This sequence belongs to the somatotropin/prolactin family.

It localises to the secreted. In terms of biological role, growth hormone plays an important role in growth control and involved in the regulation of several anabolic processes. The chain is Somatotropin (gh) from Oreochromis niloticus (Nile tilapia).